The following is a 1709-amino-acid chain: Hybrid signal transduction histidine kinase L (1709 aa).

Disordered stretches follow at residues 52–192, 206–276, 413–535, and 554–615; these read SNNN…SPPH, FFSG…NSSD, TSNS…NNSC, and QQQQ…IFNN. Residues 53 to 87 are compositionally biased toward low complexity; it reads NNNNNNNNNNNNNNNNNNNNNNNNNNNNNNNNNNN. The span at 88-100 shows a compositional bias: basic and acidic residues; that stretch reads NEEKSNNETEKTL. The segment covering 106-148 has biased composition (low complexity); sequence TTTTTTTNNNNNNNNNNNNNNNNNNNNNNNNNNNNNNNNNNTN. Over residues 149-170 the composition is skewed to polar residues; it reads SSNDIYMNSPSSTLSSPGNAGN. 3 stretches are compositionally biased toward low complexity: residues 413-466, 486-535, and 554-576; these read TSNS…TPNS, NNSP…NNSC, and QQQQQQQSQPTTPTQSTQSPTTS. Residues 585 to 610 show a composition bias toward polar residues; that stretch reads LTINTSFKTSPMSSPKSFNKPSQSPQ. In terms of domain architecture, PAS spans 700–771; the sequence is ATRKMVTCIE…ATLTDKKTWN (72 aa). A PAC domain is found at 770 to 822; sequence WNGFIRTRHNNNTLIYFEASISPVLDQFQQILYYNCTKRDVTQKRIDEESKTL. The Histidine kinase domain maps to 837 to 1059; that stretch reads MMSHDIRTPM…TFTCILKFKK (223 aa). Position 840 is a phosphohistidine; by autocatalysis (H840). Disordered regions lie at residues 1068–1112 and 1137–1298; these read LLPA…HQQH and QHQL…PTSP. 3 stretches are compositionally biased toward low complexity: residues 1075–1112, 1137–1153, and 1176–1194; these read LQQQQQQQQHQQQTQFHQHQQQTQFHQHQQQQLQHQQH, QHQLQQRQHHQQQLQQQ, and NQHIQQQQQQQQQQQQQQQ. Positions 1204–1221 are enriched in basic residues; it reads HNSHGHNHHGSHHNHNHQ. Polar residues-rich tracts occupy residues 1244 to 1257 and 1275 to 1298; these read NEQQLESITENSFS and NISQSPSPQSIHNGTTINQQPTSP. 2 consecutive Response regulatory domains span residues 1312 to 1492 and 1570 to 1692; these read KMLF…MMYL and KVLV…KKYG. D1366 is modified (4-aspartylphosphate). Composition is skewed to low complexity over residues 1390 to 1412 and 1420 to 1440; these read QHLQQQQEQEQQQQQEQQQSELQ and KNSSQNNDNNNNNNKSNSSGG. The tract at residues 1390–1440 is disordered; it reads QHLQQQQEQEQQQQQEQQQSELQKQPDVENKNSSQNNDNNNNNNKSNSSGG. Position 1622 is a 4-aspartylphosphate (D1622).

Activation probably requires transfer of a phosphate group between a histidine in the kinase core (transmitter) domain and an aspartate of the receiver domain.

It carries out the reaction ATP + protein L-histidine = ADP + protein N-phospho-L-histidine.. Functionally, acts as a receptor histidine kinase for a signal transduction pathway. This protein undergoes an ATP-dependent autophosphorylation at a conserved histidine residue in the kinase core, and a phosphoryl group is then transferred to a conserved aspartate residue in the receiver domain. The sequence is that of Hybrid signal transduction histidine kinase L (dhkL) from Dictyostelium discoideum (Social amoeba).